We begin with the raw amino-acid sequence, 1171 residues long: MSLRFVIGRAGSGKSTLCLHEVQEELKQRPRGETILYLVPEQMTFQTQQALIGSEDVRGSIRAQVFSFSRLAWKVLQEVGGASRLHIDEAGVHMLLRKIVESRKDGLSVFQKAAEQNGFFEHLGSMIAEFKRYNVTPSNVYEMWQQLDAHSSSAEQKLLANKVYDLQLLYDDFERALIGKYLDSEDYLQLLVEKLPQSEYVKGAEIYIDGFHSFSPQELEIVRQLMICGARVTITLTIDEKTLAQPVNELDLFYETTLTYEKIKQVAREEKIEIEKTIPLMEQPRFHSPALAHLEAHYEARPNEKFNGEASVTIHTAANLRAEVEGVAREIRRLVADENYRYRDIAVLLRNGESYYDVMRTLFTDYNIPHFIDEKRPMSHHPLVECIRSALEIISGNWRYDAVFRCVKTELLYPLDVRKETMREEMDEFENYCLAYGVQGKRWTSEDPWMYRRYRSLDDTDGMITDSEREMEEKINRLRGVVRTPVIRMQKRLKRAGTVMQMCEAVYLFLEELDVPKKLEALRIRAEESGDFLFATDHEQVWEEVMSLLDTFVEMLGEEKMSLSMFTDVMSTGLEALQFANIPPSLDQVLIANIDRSRLSNVKATFVIGVNEGVIPAAPMDEGMLSDEERDVLSAAGIELAPTTRQTLLEEQFVMYQMVTRATEKLYISCPLADEEGKTLLASSFIKKIKRMFPDVKDTFITNDVNDLSRSEQISYVATPEVTLSYVMQQLQTWKRYGFEGNLDFWWDVYNFYVTSDEWKQKSSRVLSSLFYRNRAQKLSTAVSRDLYGDKIKGSVSRMELFNRCAYAHFAQHGLSLRERDIFKLDAPDIGELFHAALKRIADRLLRENRTWADLSIKECEHLSAVVIEEIAPLLQRQILLSSNRHFYLKQKLQQIIFRTSIILREHAKSSGFVPVDLEVPFGMGGTGSLPPMEFSLPNGVKMEVVGRIDRVDKAEDENGTFLRIIDYKSSSKALDLTEVYYGLALQMLTYLDVVTSNAHTWMKKGGTASPAGVLYFHIHNPIVEVKGDASEAEIEKEILKKFKMKGLVLGDADVVRLMDNKLSTGSSDIISAGLKKDGSFSARSSIASEQEFNVLQKYVHHTFENIGKDITEGVIDIAPYKKGNKAACTFCNFKSVCQFDESLEDNQFRTLKDMKDSEAMEKIREEVGGE.

The UvrD-like helicase ATP-binding domain occupies 1–343 (MSLRFVIGRA…LVADENYRYR (343 aa)). 8-15 (GRAGSGKS) lines the ATP pocket. The 307-residue stretch at 281-587 (MEQPRFHSPA…QFANIPPSLD (307 aa)) folds into the UvrD-like helicase C-terminal domain. Residues cysteine 805, cysteine 1129, cysteine 1132, and cysteine 1138 each coordinate [4Fe-4S] cluster.

The protein belongs to the helicase family. AddB/RexB type 1 subfamily. As to quaternary structure, heterodimer of AddA and AddB. The cofactor is Mg(2+). [4Fe-4S] cluster serves as cofactor.

Functionally, the heterodimer acts as both an ATP-dependent DNA helicase and an ATP-dependent, dual-direction single-stranded exonuclease. Recognizes the chi site generating a DNA molecule suitable for the initiation of homologous recombination. The AddB subunit has 5' -&gt; 3' nuclease activity but not helicase activity. The protein is ATP-dependent helicase/deoxyribonuclease subunit B of Bacillus cereus (strain AH187).